The chain runs to 127 residues: Large ribosomal subunit protein bL20 (127 aa).

The protein belongs to the bacterial ribosomal protein bL20 family.

Its function is as follows. Binds directly to 23S ribosomal RNA and is necessary for the in vitro assembly process of the 50S ribosomal subunit. It is not involved in the protein synthesizing functions of that subunit. The chain is Large ribosomal subunit protein bL20 (rplT) from Mycoplasma pneumoniae (strain ATCC 29342 / M129 / Subtype 1) (Mycoplasmoides pneumoniae).